We begin with the raw amino-acid sequence, 434 residues long: DNA primase large subunit PriL (434 aa).

The [4Fe-4S] cluster site is built by cysteine 281, cysteine 392, cysteine 403, and cysteine 409.

The protein belongs to the eukaryotic-type primase large subunit family. As to quaternary structure, heterodimer of a small subunit (PriS) and a large subunit (PriL). [4Fe-4S] cluster is required as a cofactor.

In terms of biological role, regulatory subunit of DNA primase, an RNA polymerase that catalyzes the synthesis of short RNA molecules used as primers for DNA polymerase during DNA replication. Stabilizes and modulates the activity of the small subunit, increasing the rate of DNA synthesis, and conferring RNA synthesis capability. The DNA polymerase activity may enable DNA primase to also catalyze primer extension after primer synthesis. May also play a role in DNA repair. This is DNA primase large subunit PriL from Methanothermobacter thermautotrophicus (strain ATCC 29096 / DSM 1053 / JCM 10044 / NBRC 100330 / Delta H) (Methanobacterium thermoautotrophicum).